Here is a 1364-residue protein sequence, read N- to C-terminus: Trifunctional purine biosynthetic protein adenosine-3 (1364 aa).

The 208-residue stretch at Lys-114–Ser-321 folds into the ATP-grasp domain. Residue Ile-140–Ser-202 coordinates ATP. Mn(2+) is bound by residues Glu-291 and Asn-293. Residues Ala-435–Pro-1154 are AIRS. The GART stretch occupies residues Arg-1155–Gln-1364. A N(1)-(5-phospho-beta-D-ribosyl)glycinamide-binding site is contributed by Gly-1166 to Asn-1168. Residues Arg-1221, Met-1246–Leu-1249, and Asn-1263 contribute to the (6R)-10-formyltetrahydrofolate site. Residue His-1265 is the Proton donor of the active site. Asp-1297 to Asp-1301 contributes to the (6R)-10-formyltetrahydrofolate binding site. His-1327–Glu-1330 serves as a coordination point for N(1)-(5-phospho-beta-D-ribosyl)glycinamide.

The protein in the N-terminal section; belongs to the GARS family. It in the central section; belongs to the AIR synthase family. This sequence in the C-terminal section; belongs to the GART family.

It catalyses the reaction 5-phospho-beta-D-ribosylamine + glycine + ATP = N(1)-(5-phospho-beta-D-ribosyl)glycinamide + ADP + phosphate + H(+). It carries out the reaction 2-formamido-N(1)-(5-O-phospho-beta-D-ribosyl)acetamidine + ATP = 5-amino-1-(5-phospho-beta-D-ribosyl)imidazole + ADP + phosphate + H(+). The enzyme catalyses N(1)-(5-phospho-beta-D-ribosyl)glycinamide + (6R)-10-formyltetrahydrofolate = N(2)-formyl-N(1)-(5-phospho-beta-D-ribosyl)glycinamide + (6S)-5,6,7,8-tetrahydrofolate + H(+). The protein operates within purine metabolism; IMP biosynthesis via de novo pathway; 5-amino-1-(5-phospho-D-ribosyl)imidazole from N(2)-formyl-N(1)-(5-phospho-D-ribosyl)glycinamide: step 2/2. It participates in purine metabolism; IMP biosynthesis via de novo pathway; N(1)-(5-phospho-D-ribosyl)glycinamide from 5-phospho-alpha-D-ribose 1-diphosphate: step 2/2. Its pathway is purine metabolism; IMP biosynthesis via de novo pathway; N(2)-formyl-N(1)-(5-phospho-D-ribosyl)glycinamide from N(1)-(5-phospho-D-ribosyl)glycinamide (10-formyl THF route): step 1/1. Trifunctional enzyme required for de novo purine biosynthesis. The protein is Trifunctional purine biosynthetic protein adenosine-3 (ade3) of Drosophila pseudoobscura pseudoobscura (Fruit fly).